The sequence spans 101 residues: Urease subunit gamma (101 aa).

This sequence belongs to the urease gamma subunit family. Heterotrimer of UreA (gamma), UreB (beta) and UreC (alpha) subunits. Three heterotrimers associate to form the active enzyme.

The protein resides in the cytoplasm. It catalyses the reaction urea + 2 H2O + H(+) = hydrogencarbonate + 2 NH4(+). Its pathway is nitrogen metabolism; urea degradation; CO(2) and NH(3) from urea (urease route): step 1/1. The sequence is that of Urease subunit gamma from Corynebacterium kroppenstedtii (strain DSM 44385 / JCM 11950 / CIP 105744 / CCUG 35717).